Reading from the N-terminus, the 268-residue chain is ClpXP adapter protein SpxH (268 aa).

This sequence belongs to the SpxH family. As to quaternary structure, interacts with Spx.

The protein resides in the cytoplasm. Its function is as follows. Adapter protein required for efficient degradation of Spx by ClpXP under non-stress conditions. Interaction with Spx stabilizes Spx and exposes the C-terminus of Spx for recognition and proteolysis by ClpXP. The protein is ClpXP adapter protein SpxH of Staphylococcus aureus (strain MRSA252).